The primary structure comprises 116 residues: NADPH-dependent 7-cyano-7-deazaguanine reductase (116 aa).

Catalysis depends on cysteine 31, which acts as the Thioimide intermediate. Aspartate 38 functions as the Proton donor in the catalytic mechanism. Residues valine 53–leucine 55 and tyrosine 72–glutamate 73 each bind substrate.

Belongs to the GTP cyclohydrolase I family. QueF type 1 subfamily.

It is found in the cytoplasm. The catalysed reaction is 7-aminomethyl-7-carbaguanine + 2 NADP(+) = 7-cyano-7-deazaguanine + 2 NADPH + 3 H(+). The protein operates within tRNA modification; tRNA-queuosine biosynthesis. Functionally, catalyzes the NADPH-dependent reduction of 7-cyano-7-deazaguanine (preQ0) to 7-aminomethyl-7-deazaguanine (preQ1). In Chlorobium chlorochromatii (strain CaD3), this protein is NADPH-dependent 7-cyano-7-deazaguanine reductase.